The following is a 303-amino-acid chain: tRNA (guanine-N(7)-)-methyltransferase (303 aa).

Residues 1–64 (MPKPHQVQVI…STSDKISLPR (64 aa)) are disordered. Residues 10-38 (IKDRETQLREQQEAESKRRTYRDVKEETR) show a composition bias toward basic and acidic residues. S-adenosyl-L-methionine is bound by residues Gly118, 141–142 (EI), 177–178 (NA), and Cys197. Asp200 is an active-site residue. S-adenosyl-L-methionine is bound at residue 275–277 (TEE).

Belongs to the class I-like SAM-binding methyltransferase superfamily. TrmB family. As to quaternary structure, forms a complex with TRM82.

It is found in the nucleus. The catalysed reaction is guanosine(46) in tRNA + S-adenosyl-L-methionine = N(7)-methylguanosine(46) in tRNA + S-adenosyl-L-homocysteine. The protein operates within tRNA modification; N(7)-methylguanine-tRNA biosynthesis. Its function is as follows. Catalyzes the formation of N(7)-methylguanine at position 46 (m7G46) in tRNA. In Scheffersomyces stipitis (strain ATCC 58785 / CBS 6054 / NBRC 10063 / NRRL Y-11545) (Yeast), this protein is tRNA (guanine-N(7)-)-methyltransferase.